Reading from the N-terminus, the 280-residue chain is Transmembrane protein 119 (280 aa).

The N-terminal stretch at 1–20 is a signal peptide; that stretch reads MVPWFLLSLLLLARPVPGVA. Over 21-91 the chain is Extracellular; that stretch reads YSVSLPASFL…IMDFFRQYVM (71 aa). O-linked (Xyl...) (chondroitin sulfate) serine glycosylation is present at Ser-36. Positions 38-47 are enriched in low complexity; sequence EAEGSSASSP. A disordered region spans residues 38 to 73; the sequence is EAEGSSASSPSLPPPGTPAFSPTPERPQPTALDGPV. The helical transmembrane segment at 92–112 threads the bilayer; that stretch reads LIAVVGSLTFLIMFIVCAALI. Over 113–280 the chain is Cytoplasmic; it reads TRQKHKATAY…CACNRVSPSV (168 aa). 2 disordered regions span residues 133 to 162 and 181 to 280; these read VDQR…EGLD and PARA…SPSV. A compositionally biased stretch (basic and acidic residues) spans 148–162; that stretch reads VPDRAPDSRHEEGLD. At Ser-269 the chain carries Phosphoserine.

As to quaternary structure, interacts with SMAD1, SMAD5 and RUNX2. As to expression, expressed in spermatocytes and spermatids in the developing testis (at protein level). Expressed in the brain, heart, lung, spleen, skeletal muscle, ovary, testis and epididymis. Predominantly expressed in osteoblasts.

It is found in the cell membrane. The protein localises to the cytoplasm. It localises to the endoplasmic reticulum membrane. Its subcellular location is the secreted. In terms of biological role, plays an important role in bone formation and normal bone mineralization. Promotes the differentiation of myoblasts into osteoblasts. May induce the commitment and differentiation of myoblasts into osteoblasts through an enhancement of BMP2 production and interaction with the BMP-RUNX2 pathway. Up-regulates the expression of ATF4 which plays a central role in osteoblast differentiation. Essential for normal spermatogenesis and late testicular differentiation. This is Transmembrane protein 119 (Tmem119) from Mus musculus (Mouse).